We begin with the raw amino-acid sequence, 176 residues long: Ribosome rescue factor SmrB (176 aa).

Residues 93–168 (LDLHGYRQSE…GDAALLVLID (76 aa)) enclose the Smr domain.

It belongs to the SmrB family. In terms of assembly, associates with collided ribosomes, but not with correctly translating polysomes.

In terms of biological role, acts as a ribosome collision sensor. Detects stalled/collided disomes (pairs of ribosomes where the leading ribosome is stalled and a second ribosome has collided with it) and endonucleolytically cleaves mRNA at the 5' boundary of the stalled ribosome. Stalled/collided disomes form a new interface (primarily via the 30S subunits) that binds SmrB. Cleaved mRNA becomes available for tmRNA ligation, leading to ribosomal subunit dissociation and rescue of stalled ribosomes. This chain is Ribosome rescue factor SmrB, found in Shewanella sp. (strain ANA-3).